Reading from the N-terminus, the 356-residue chain is Peptide chain release factor 1 (356 aa).

Gln-234 is modified (N5-methylglutamine).

Belongs to the prokaryotic/mitochondrial release factor family. In terms of processing, methylated by PrmC. Methylation increases the termination efficiency of RF1.

The protein localises to the cytoplasm. Its function is as follows. Peptide chain release factor 1 directs the termination of translation in response to the peptide chain termination codons UAG and UAA. The protein is Peptide chain release factor 1 of Exiguobacterium sp. (strain ATCC BAA-1283 / AT1b).